The following is a 214-amino-acid chain: UPF0301 protein NFA_55110 (214 aa).

Positions 1-24 (MARADDPDERKTQGGHGDRRRREF) are disordered.

Belongs to the UPF0301 (AlgH) family.

The protein is UPF0301 protein NFA_55110 of Nocardia farcinica (strain IFM 10152).